Consider the following 418-residue polypeptide: Methionine aminopeptidase 2 (418 aa).

Residues 18 to 49 are disordered; sequence VSEPAAVDDSEVTEDATVQDKKKKKKKKKKKG. Over residues 38–49 the composition is skewed to basic residues; the sequence is KKKKKKKKKKKG. H172 contacts substrate. Residues D192, D203, and H272 each coordinate a divalent metal cation. Substrate is bound at residue H280. Residues E305 and E399 each coordinate a divalent metal cation.

It belongs to the peptidase M24A family. Methionine aminopeptidase eukaryotic type 2 subfamily. Requires Co(2+) as cofactor. The cofactor is Zn(2+). It depends on Mn(2+) as a cofactor. Fe(2+) serves as cofactor.

The protein resides in the cytoplasm. The catalysed reaction is Release of N-terminal amino acids, preferentially methionine, from peptides and arylamides.. Its function is as follows. Cotranslationally removes the N-terminal methionine from nascent proteins. The N-terminal methionine is often cleaved when the second residue in the primary sequence is small and uncharged (Met-Ala-, Cys, Gly, Pro, Ser, Thr, or Val). The polypeptide is Methionine aminopeptidase 2 (Kluyveromyces lactis (strain ATCC 8585 / CBS 2359 / DSM 70799 / NBRC 1267 / NRRL Y-1140 / WM37) (Yeast)).